The primary structure comprises 282 residues: Bifunctional protein FolD 2 (282 aa).

NADP(+)-binding positions include glycine 165–serine 167 and serine 190.

The protein belongs to the tetrahydrofolate dehydrogenase/cyclohydrolase family. In terms of assembly, homodimer.

The enzyme catalyses (6R)-5,10-methylene-5,6,7,8-tetrahydrofolate + NADP(+) = (6R)-5,10-methenyltetrahydrofolate + NADPH. The catalysed reaction is (6R)-5,10-methenyltetrahydrofolate + H2O = (6R)-10-formyltetrahydrofolate + H(+). Its pathway is one-carbon metabolism; tetrahydrofolate interconversion. Catalyzes the oxidation of 5,10-methylenetetrahydrofolate to 5,10-methenyltetrahydrofolate and then the hydrolysis of 5,10-methenyltetrahydrofolate to 10-formyltetrahydrofolate. This is Bifunctional protein FolD 2 from Acinetobacter baylyi (strain ATCC 33305 / BD413 / ADP1).